The sequence spans 115 residues: Large ribosomal subunit protein bL20c (115 aa).

This sequence belongs to the bacterial ribosomal protein bL20 family.

Its subcellular location is the plastid. It is found in the chloroplast. Functionally, binds directly to 23S ribosomal RNA and is necessary for the in vitro assembly process of the 50S ribosomal subunit. It is not involved in the protein synthesizing functions of that subunit. The chain is Large ribosomal subunit protein bL20c from Pyropia yezoensis (Susabi-nori).